Here is a 471-residue protein sequence, read N- to C-terminus: GDP-mannose transporter (471 aa).

Polar residues predominate over residues 1 to 13; sequence MSSGSRSFFTPQE. Positions 1–52 are disordered; sequence MSSGSRSFFTPQETRLELPQGAAHQTPDITRPASPSENDRAPFLNGGPSDAR. The Cytoplasmic segment spans residues 1–70; that stretch reads MSSGSRSFFT…ALRNDSEKPA (70 aa). The helical transmembrane segment at 71–91 threads the bilayer; it reads VGIMALAPILCYCAASITMTV. Over 92 to 101 the chain is Lumenal; sequence VNKFTVSGRG. A helical membrane pass occupies residues 102-122; the sequence is FNMNLLVLLIQSTVGVTCVWI. Topologically, residues 123–139 are cytoplasmic; the sequence is AERAGLIQLRGLNAKDA. The chain crosses the membrane as a helical span at residues 140–160; the sequence is WNWMPLSIMLVFVIWTGSKAL. The Lumenal segment spans residues 161–166; that stretch reads QYLNIS. A glycan (N-linked (GlcNAc...) asparagine) is linked at Asn-164. The helical transmembrane segment at 167-187 threads the bilayer; sequence VYTIFKNLTIILIAYGEVMWF. Over 188–193 the chain is Cytoplasmic; the sequence is GGRVTR. The helical transmembrane segment at 194-214 threads the bilayer; sequence IVLCSFLFMVLSSVIAAWSDI. Residues 215–279 lie on the Lumenal side of the membrane; it reads SNVFAIGNLS…DVIEGFQGYG (65 aa). Asn-222 is a glycosylation site (N-linked (GlcNAc...) asparagine). Residues 280 to 300 traverse the membrane as a helical segment; the sequence is LLSSGYVWMALNCICSATYVL. Residues 301–315 are Cytoplasmic-facing; the sequence is LMRKRIKVTGFKDWD. A helical transmembrane segment spans residues 316–336; it reads TMFYNNFLSIPVLLLMSFLVE. Topologically, residues 337–354 are lumenal; it reads DWSYANLHKNFPDDKQTK. A helical membrane pass occupies residues 355–375; the sequence is LISAIVFSGACAILISYTTAW. The Cytoplasmic segment spans residues 376-383; sequence CIRATSST. The helical transmembrane segment at 384 to 404 threads the bilayer; it reads TYSMVGALNKLPVALSGMVFF. Over 405-408 the chain is Lumenal; the sequence is HDPP. The chain crosses the membrane as a helical span at residues 409 to 429; sequence VTFSSVSAIAVGFFAGLVYAF. The Cytoplasmic segment spans residues 430-471; sequence GKNKQAEAAKLGGHASANGSSSMSGSKDGSSLPMHTFNDRKD. Residues 442–460 are compositionally biased toward low complexity; that stretch reads GHASANGSSSMSGSKDGSS. The interval 442 to 471 is disordered; that stretch reads GHASANGSSSMSGSKDGSSLPMHTFNDRKD.

Belongs to the TPT transporter family. SLC35D subfamily. As to quaternary structure, homooligomer.

It is found in the golgi apparatus membrane. It localises to the cytoplasmic vesicle membrane. Its subcellular location is the endoplasmic reticulum membrane. Involved in the import of GDP-mannose from the cytoplasm into the Golgi lumen. The protein is GDP-mannose transporter (VRG4) of Mycosarcoma maydis (Corn smut fungus).